The chain runs to 494 residues: Cytochrome P450 2G1 (494 aa).

Cys-439 serves as a coordination point for heme.

The protein belongs to the cytochrome P450 family. It depends on heme as a cofactor. As to expression, olfactory epithelium.

The protein resides in the endoplasmic reticulum membrane. The protein localises to the microsome membrane. The catalysed reaction is an organic molecule + reduced [NADPH--hemoprotein reductase] + O2 = an alcohol + oxidized [NADPH--hemoprotein reductase] + H2O + H(+). Its function is as follows. Cytochromes P450 are a group of heme-thiolate monooxygenases. This isozyme seems to be implicated in olfaction. This chain is Cytochrome P450 2G1 (Cyp2g1), found in Rattus norvegicus (Rat).